Reading from the N-terminus, the 399-residue chain is Argininosuccinate synthase (399 aa).

Residues 10 to 18 (AYSGGVDTS) and Ala-38 each bind ATP. Residue Tyr-89 participates in L-citrulline binding. Gly-119 contributes to the ATP binding site. 3 residues coordinate L-aspartate: Thr-121, Asn-125, and Asp-126. Asn-125 contacts L-citrulline. Residues Arg-129, Ser-177, Ser-186, Glu-262, and Tyr-274 each contribute to the L-citrulline site.

The protein belongs to the argininosuccinate synthase family. Type 1 subfamily. In terms of assembly, homotetramer.

It localises to the cytoplasm. It catalyses the reaction L-citrulline + L-aspartate + ATP = 2-(N(omega)-L-arginino)succinate + AMP + diphosphate + H(+). It functions in the pathway amino-acid biosynthesis; L-arginine biosynthesis; L-arginine from L-ornithine and carbamoyl phosphate: step 2/3. The sequence is that of Argininosuccinate synthase from Acaryochloris marina (strain MBIC 11017).